The chain runs to 129 residues: Small ribosomal subunit protein uS8 (129 aa).

Belongs to the universal ribosomal protein uS8 family. In terms of assembly, part of the 30S ribosomal subunit.

Its function is as follows. One of the primary rRNA binding proteins, it binds directly to 16S rRNA central domain where it helps coordinate assembly of the platform of the 30S subunit. This chain is Small ribosomal subunit protein uS8, found in Archaeoglobus fulgidus (strain ATCC 49558 / DSM 4304 / JCM 9628 / NBRC 100126 / VC-16).